Here is a 416-residue protein sequence, read N- to C-terminus: Tyrosine--tRNA ligase (416 aa).

Residue Tyr40 coordinates L-tyrosine. Residues 45 to 54 (ATAKSLHVGS) carry the 'HIGH' region motif. Positions 177 and 181 each coordinate L-tyrosine. A 'KMSKS' region motif is present at residues 237 to 241 (KMGKS). Lys240 is a binding site for ATP. In terms of domain architecture, S4 RNA-binding spans 351–415 (ISIVQLIVKS…GKKRHAMVQL (65 aa)).

Belongs to the class-I aminoacyl-tRNA synthetase family. TyrS type 1 subfamily. As to quaternary structure, homodimer.

Its subcellular location is the cytoplasm. It catalyses the reaction tRNA(Tyr) + L-tyrosine + ATP = L-tyrosyl-tRNA(Tyr) + AMP + diphosphate + H(+). Its function is as follows. Catalyzes the attachment of tyrosine to tRNA(Tyr) in a two-step reaction: tyrosine is first activated by ATP to form Tyr-AMP and then transferred to the acceptor end of tRNA(Tyr). This Roseobacter denitrificans (strain ATCC 33942 / OCh 114) (Erythrobacter sp. (strain OCh 114)) protein is Tyrosine--tRNA ligase.